Here is a 475-residue protein sequence, read N- to C-terminus: LEC14B homolog (475 aa).

Residues 1 to 34 (MSYRTRFGKDNSACDSGNAVEGSGSSKGPNEVSN) form a disordered region. Polar residues predominate over residues 23 to 33 (SGSSKGPNEVS). 5 WD repeats span residues 211 to 240 (DEFG…YVYD), 252 to 283 (AHSS…KVWD), 299 to 329 (GHLE…QLWD), 375 to 411 (GHGV…YIYD), and 423 to 453 (HHEG…ARWE).

It belongs to the WD repeat LEC14B family.

This Prunus armeniaca (Apricot) protein is LEC14B homolog.